We begin with the raw amino-acid sequence, 931 residues long: MAEAEAAQLKEEGNRHFQLQDYKAATKSYSQALKLTKDKALLATLYRNRAACGLKMESYAQAASDASRAIDINSADIKALYRRCQALEHLGKLDQAFKDVQRCATLEPRNQNFQETLRRLNTSIQEQLRVQFSTDSRVQTMFEILLNENSEADKREKAANNLIVLGREEAGAERIFQSNGVALLLQLMNTQRPELLLAAVRTLSGMCSGHRARATAILHAVRIDRICSLMALENEEMSLAVCNLLQAIIDSLSGEDKREHRGKEEALVLDTKKDLKQITSHLLDMLVSKKVSGQGRDQALNLLNKNVPRKDLSIHDNSRTIYVVDNGLRKILKVVGQVPDLPSCLPLTDNTRMLASILINKLYDDLRCDPERDHFRKICEEYITSKFDPQDMDKNVNAIQTVSGILQGPFDLGNQLLGMKGVMEMMVALCGSEREADQLVAVEALIHASTKLSRATFIITNGVTLLKQIYKTTKNEKIKIRTLVGLCKLGSAGGSDYGLRQFAEGSTEKLAKQCRKWLCNTAIDTRTRRWAVEGLAYLTLDADVKDDFVQDIPALQAMFELAKARTSDKTILYSVANTLVNCTNSYDVKEVVPELVQLAKFSKQHVPEEHPKDKKDFVDLRVKRLLKAGVISALACMVKADSAILTDQTKELLARVFLALCDNPKDRGTIVAQGGGKALIPLALEGTDVGKVKAAHGLAKIAAVSNPDIAFPGERVYEVVRPLVSLLDTQRDGLQNYEALLGLTNLSGRSDKLRQKIFKEKALPDIENYMFENHDQLRQAATECMCNMVLNKEVQERFLADGNDRLKLVVLLCGEDDHKLQNAAAGALAMLTAAHKKLCLKMTEVTTQWLEILQRLCLHDQLSVQHRGLVIAHNLLSADAELARKLVESELLEILTVVGKQEPDEKRAAVVQTARECLIKCMDYGFIKPVS.

3 TPR repeats span residues Ala6 to Lys39, Ala43 to Asp76, and Ile77 to Asn110. 3 ARM repeats span residues Glu169–Ser208, Arg211–Asp250, and Asp751–Leu790.

As to quaternary structure, interacts with HSP90 in an ATP-independent manner. Interacts with UBE4B; the interaction may target UNC45B for proteasomal degradation. Highly expressed in adult skeletal muscle and heart. Detected at intermediate levels in lung. Highly expressed in embryonic heart.

The protein localises to the cytoplasm. Its subcellular location is the myofibril. The protein resides in the sarcomere. It is found in the z line. It localises to the a band. The protein localises to the perinuclear region. Its subcellular location is the cytosol. Acts as a co-chaperone for HSP90 and is required for proper folding of the myosin motor domain. Plays a role in sarcomere formation during muscle cell development. Is necessary for normal early lens development. This Mus musculus (Mouse) protein is Protein unc-45 homolog B (Unc45b).